The following is a 668-amino-acid chain: Putative ankyrin repeat protein FPV244 (668 aa).

ANK repeat units lie at residues 40–69 (IPFT…KLIY), 144–173 (EYMK…DVNA), 177–206 (YCRT…DVNI), 210–239 (DDLS…NINK), 272–302 (YKNT…DVNA), 306–336 (KGET…DVNA), 340–370 (LYIT…NVNA), 374–403 (CDKT…DIEA), 407–437 (KIGT…NVNS), 441–471 (YLST…DVNA), 473–502 (NIRN…ELRD), and 571–602 (NMFY…EINT).

In Vertebrata (FPV), this protein is Putative ankyrin repeat protein FPV244.